Here is a 102-residue protein sequence, read N- to C-terminus: NADH-quinone oxidoreductase subunit K (102 aa).

3 helical membrane passes run 5–25, 31–51, and 62–82; these read LAHYLILGAILFAIGIFGIFL, IILLMSIELVLLAVNMNFVAF, and VFVFFILTVAAAEAAIGLAIL.

Belongs to the complex I subunit 4L family. As to quaternary structure, NDH-1 is composed of 14 different subunits. Subunits NuoA, H, J, K, L, M, N constitute the membrane sector of the complex.

It is found in the cell inner membrane. The enzyme catalyses a quinone + NADH + 5 H(+)(in) = a quinol + NAD(+) + 4 H(+)(out). Its function is as follows. NDH-1 shuttles electrons from NADH, via FMN and iron-sulfur (Fe-S) centers, to quinones in the respiratory chain. The immediate electron acceptor for the enzyme in this species is believed to be ubiquinone. Couples the redox reaction to proton translocation (for every two electrons transferred, four hydrogen ions are translocated across the cytoplasmic membrane), and thus conserves the redox energy in a proton gradient. The polypeptide is NADH-quinone oxidoreductase subunit K (Bordetella parapertussis (strain 12822 / ATCC BAA-587 / NCTC 13253)).